A 500-amino-acid chain; its full sequence is DNA double-strand break repair helicase HerA (500 aa).

Residues arginine 142, 151–156, and 459–460 each bind ATP; these read GSGKSN and KI.

This sequence belongs to the HerA family. As to quaternary structure, homohexamer. Forms a complex with NurA.

It carries out the reaction Couples ATP hydrolysis with the unwinding of duplex DNA at the replication fork by translocating in the 5'-3' direction. This creates two antiparallel DNA single strands (ssDNA). The leading ssDNA polymer is the template for DNA polymerase III holoenzyme which synthesizes a continuous strand.. The enzyme catalyses ATP + H2O = ADP + phosphate + H(+). It catalyses the reaction Couples ATP hydrolysis with the unwinding of duplex DNA by translocating in the 3'-5' direction.. Its activity is regulated as follows. ATPase activity is stimulated in the presence of linear double-stranded (ds)DNA. Helicase activity requires the presence of NurA. LhrC-Core (Hel112) inhibits the exonuclease activity of the HerA-NurA complex on ss- and dsDNA, has no effect on the nicking activity of NurA. Its function is as follows. Involved in DNA double-strand break (DSB) repair. Probably acts with NurA to stimulate resection of the 5' strand and produce the long 3' single-strand that is required for RadA loading. NurA and HerA together stimulate the end-resection of six nucleotides of a linear DNA substrate. Has DNA-dependent ATPase activity and bidirectional DNA helicase activity. Preferentially binds single stranded (ss)DNA, bubble and semiforked DNA substrate over other DNA molecules tested. Stimulates the exo- but not endonuclease activity of NurA. This is DNA double-strand break repair helicase HerA from Saccharolobus solfataricus (strain ATCC 35092 / DSM 1617 / JCM 11322 / P2) (Sulfolobus solfataricus).